The following is a 483-amino-acid chain: Shaker-related potassium channel tsha2 (483 aa).

The Cytoplasmic segment spans residues 1 to 165 (MTVVSCEIQD…YPESSGPARM (165 aa)). The chain crosses the membrane as a helical span at residues 166–186 (IAVVSVSVIVISIVIFCLETL). The Extracellular segment spans residues 187–220 (PQFREDTSANLPLSNHHTTNGTTLHKKPNLFTDP). A helical transmembrane segment spans residues 221–241 (FFMVETLCIVWFSFEFLVRFL). The Cytoplasmic portion of the chain corresponds to 242-252 (SCPSKPAFFKN). A lipid anchor (S-palmitoyl cysteine) is attached at Cys243. A helical transmembrane segment spans residues 253–273 (AMNSIDILAIAPYFITLGLEL). Residues 274–324 (AEQQEAGSEQAMSLAILRVIRLVRVFRIFKLSRHSKGLQILGQTLHASISE) are Extracellular-facing. Residues 325-345 (LGLLIFFLLIGVILFSSAVYF) traverse the membrane as a helical; Voltage-sensor segment. Residues 346 to 353 (AEADDPES) lie on the Cytoplasmic side of the membrane. Residues 354-374 (GFSSIPAAFWWAVVSMTTVGY) form a helical membrane-spanning segment. The short motif at 371–376 (TVGYGD) is the Selectivity filter element. Residues 375 to 385 (GDMCPVTIGGK) lie on the Extracellular side of the membrane. Residues 386–406 (IVGSMCAIAGVLTIALPVPVI) form a helical membrane-spanning segment. At 407–483 (VSNFNYFYHR…EHYTGKLTDV (77 aa)) the chain is on the cytoplasmic side. Residue Tyr426 is modified to Phosphotyrosine. Thr430 carries the phosphothreonine modification. A compositionally biased stretch (polar residues) spans 440-452 (EFKSTSDSRQSLT). Residues 440–459 (EFKSTSDSRQSLTKSEDTEE) are disordered. Residues 481–483 (TDV) carry the PDZ-binding motif.

It belongs to the potassium channel family. A (Shaker) (TC 1.A.1.2) subfamily. Heterotetramer of potassium channel proteins. Binds PDZ domains of dlg1, dlg2 and dlg4. As to expression, expressed in oligodendrocytes and astrocytes.

The protein localises to the membrane. Mediates the voltage-dependent potassium ion permeability of excitable membranes. Assuming opened or closed conformations in response to the voltage difference across the membrane, the protein forms a potassium-selective channel through which potassium ions may pass in accordance with their electrochemical gradient. The sequence is that of Shaker-related potassium channel tsha2 from Oncorhynchus mykiss (Rainbow trout).